Here is a 120-residue protein sequence, read N- to C-terminus: uncharacterized protein (120 aa).

N-linked (GlcNAc...) asparagine; by host glycosylation is found at asparagine 29 and asparagine 68. Residues 74–94 (IFNGLGFILIVIFIYLLIITL) traverse the membrane as a helical segment.

It belongs to the asfivirus B117L family.

The protein localises to the host membrane. Its subcellular location is the virion. This is an uncharacterized protein from Ornithodoros (relapsing fever ticks).